A 189-amino-acid polypeptide reads, in one-letter code: Probable nicotinate-nucleotide adenylyltransferase (189 aa).

The protein belongs to the NadD family.

It carries out the reaction nicotinate beta-D-ribonucleotide + ATP + H(+) = deamido-NAD(+) + diphosphate. It participates in cofactor biosynthesis; NAD(+) biosynthesis; deamido-NAD(+) from nicotinate D-ribonucleotide: step 1/1. Catalyzes the reversible adenylation of nicotinate mononucleotide (NaMN) to nicotinic acid adenine dinucleotide (NaAD). This chain is Probable nicotinate-nucleotide adenylyltransferase, found in Bacillus cereus (strain G9842).